A 201-amino-acid chain; its full sequence is Ribosome maturation factor RimP (201 aa).

This sequence belongs to the RimP family.

The protein resides in the cytoplasm. In terms of biological role, required for maturation of 30S ribosomal subunits. The polypeptide is Ribosome maturation factor RimP (Acidiphilium cryptum (strain JF-5)).